A 197-amino-acid polypeptide reads, in one-letter code: 7-methyl-GTP pyrophosphatase (197 aa).

The Proton acceptor role is filled by Asp-73.

The protein belongs to the Maf family. YceF subfamily. A divalent metal cation serves as cofactor.

It is found in the cytoplasm. It carries out the reaction N(7)-methyl-GTP + H2O = N(7)-methyl-GMP + diphosphate + H(+). Functionally, nucleoside triphosphate pyrophosphatase that hydrolyzes 7-methyl-GTP (m(7)GTP). May have a dual role in cell division arrest and in preventing the incorporation of modified nucleotides into cellular nucleic acids. The sequence is that of 7-methyl-GTP pyrophosphatase from Alcanivorax borkumensis (strain ATCC 700651 / DSM 11573 / NCIMB 13689 / SK2).